The sequence spans 609 residues: Dihydroxy-acid dehydratase (609 aa).

A Mg(2+)-binding site is contributed by aspartate 81. Position 122 (cysteine 122) interacts with [2Fe-2S] cluster. Mg(2+) is bound by residues aspartate 123 and lysine 124. Position 124 is an N6-carboxylysine (lysine 124). A [2Fe-2S] cluster-binding site is contributed by cysteine 195. Glutamate 491 provides a ligand contact to Mg(2+). The Proton acceptor role is filled by serine 517.

It belongs to the IlvD/Edd family. Homodimer. [2Fe-2S] cluster serves as cofactor. The cofactor is Mg(2+).

It catalyses the reaction (2R)-2,3-dihydroxy-3-methylbutanoate = 3-methyl-2-oxobutanoate + H2O. The catalysed reaction is (2R,3R)-2,3-dihydroxy-3-methylpentanoate = (S)-3-methyl-2-oxopentanoate + H2O. Its pathway is amino-acid biosynthesis; L-isoleucine biosynthesis; L-isoleucine from 2-oxobutanoate: step 3/4. It functions in the pathway amino-acid biosynthesis; L-valine biosynthesis; L-valine from pyruvate: step 3/4. Functions in the biosynthesis of branched-chain amino acids. Catalyzes the dehydration of (2R,3R)-2,3-dihydroxy-3-methylpentanoate (2,3-dihydroxy-3-methylvalerate) into 2-oxo-3-methylpentanoate (2-oxo-3-methylvalerate) and of (2R)-2,3-dihydroxy-3-methylbutanoate (2,3-dihydroxyisovalerate) into 2-oxo-3-methylbutanoate (2-oxoisovalerate), the penultimate precursor to L-isoleucine and L-valine, respectively. In Acinetobacter baumannii (strain ATCC 17978 / DSM 105126 / CIP 53.77 / LMG 1025 / NCDC KC755 / 5377), this protein is Dihydroxy-acid dehydratase.